A 511-amino-acid chain; its full sequence is ATP synthase subunit alpha (511 aa).

Residue 170–177 coordinates ATP; sequence GDRQTGKT.

It belongs to the ATPase alpha/beta chains family. F-type ATPases have 2 components, CF(1) - the catalytic core - and CF(0) - the membrane proton channel. CF(1) has five subunits: alpha(3), beta(3), gamma(1), delta(1), epsilon(1). CF(0) has three main subunits: a(1), b(2) and c(9-12). The alpha and beta chains form an alternating ring which encloses part of the gamma chain. CF(1) is attached to CF(0) by a central stalk formed by the gamma and epsilon chains, while a peripheral stalk is formed by the delta and b chains.

The protein localises to the cell inner membrane. It carries out the reaction ATP + H2O + 4 H(+)(in) = ADP + phosphate + 5 H(+)(out). Produces ATP from ADP in the presence of a proton gradient across the membrane. The alpha chain is a regulatory subunit. The chain is ATP synthase subunit alpha from Granulibacter bethesdensis (strain ATCC BAA-1260 / CGDNIH1).